Consider the following 404-residue polypeptide: O-methyltransferase GME11366 (404 aa).

Residues 237 to 238 (GG), Asp-262, Arg-301, and Arg-302 contribute to the S-adenosyl-L-methionine site. The active-site Proton acceptor is the His-305.

Belongs to the class I-like SAM-binding methyltransferase superfamily. Cation-independent O-methyltransferase family.

The protein operates within secondary metabolite biosynthesis. Functionally, O-methyltransferase; part of the gene cluster that mediates the biosynthesis of dibenzodioxocinones such as pestalotiollide B, a novel class of inhibitors against cholesterol ester transfer protein (CEPT). The biosynthesis initiates from condensation of acetate and malonate units catalyzed by the non-reducing PKS pks8/GME11356. Pks8/GME11356 lacks a thioesterase (TE) domain, which is important to the cyclizing of the third ring of atrochrysone carboxylic acid, and the esterase GME11355 might play the role of TE and catalyzes the cyclization reaction of the C ring. The lactamase-like protein GME11357 (or other beta-lactamases in Pestalotiopsis microspora) probably hydrolyzes the thioester bond between the ACP of pks8/GME11356 and the intermediate to release atrochrysone carboxylic acid, which is spontaneously dehydrates to form endocrocin anthrone. Endocrocin anthrone is further converted to emodin via the endocrocin intermediate. Emodin is then oxidized by several enzymes such as the Baeyer-Villiger oxidase GME11358, the oxidoreductase GME11367, the short chain dehydrogenase/reductase GME11373, as well as by other oxidoreductases from the cluster, to modify the A and C rings and open the B ring, and finally yield monodictyphenone. The prenyltransferase GME11375 may catalyze the addition reaction between the C5 side chains and the carbon bone of dibenzodioxocinones. The remaining biochemical reactions to the final product dibenzodioxocinones should be methylation catalyzed by methyltransferase GME11366 and reduction and lactonization reaction catalyzed by a series of oxidordeuctases. The chain is O-methyltransferase GME11366 from Pestalotiopsis microspora.